A 212-amino-acid chain; its full sequence is 2-C-methyl-D-erythritol 4-phosphate cytidylyltransferase (212 aa).

The protein belongs to the IspD/TarI cytidylyltransferase family. IspD subfamily.

The enzyme catalyses 2-C-methyl-D-erythritol 4-phosphate + CTP + H(+) = 4-CDP-2-C-methyl-D-erythritol + diphosphate. The protein operates within isoprenoid biosynthesis; isopentenyl diphosphate biosynthesis via DXP pathway; isopentenyl diphosphate from 1-deoxy-D-xylulose 5-phosphate: step 2/6. Functionally, catalyzes the formation of 4-diphosphocytidyl-2-C-methyl-D-erythritol from CTP and 2-C-methyl-D-erythritol 4-phosphate (MEP). The polypeptide is 2-C-methyl-D-erythritol 4-phosphate cytidylyltransferase (Chlamydia caviae (strain ATCC VR-813 / DSM 19441 / 03DC25 / GPIC) (Chlamydophila caviae)).